The following is a 153-amino-acid chain: Cofilin (153 aa).

Positions 4–148 (SGATVSQDCI…EYDSILKTVS (145 aa)) constitute an ADF-H domain.

It belongs to the actin-binding proteins ADF family.

The protein resides in the cytoplasm. The protein localises to the cytoskeleton. It is found in the nucleus matrix. Functionally, controls reversibly actin polymerization and depolymerization in a pH-sensitive manner. It has the ability to bind G- and F-actin in a 1:1 ratio of cofilin to actin. Binding to F-actin is regulated by tropomyosin. It is the major component of intranuclear and cytoplasmic actin rods. Required for accumulation of actin at the cell division site via depolymerizing actin at the cell ends. In association with myosin II has a role in the assembly of the contractile ring via severing actin filaments. Involved in the maintenance of the contractile ring once formed. In association with profilin and capping protein, has a role in the mitotic reorganization of the actin cytoskeleton. The protein is Cofilin (COF1) of Gibberella zeae (strain ATCC MYA-4620 / CBS 123657 / FGSC 9075 / NRRL 31084 / PH-1) (Wheat head blight fungus).